The primary structure comprises 636 residues: Bifunctional phosphonoacetaldehyde hydrolase/aminoethylphosphonate transaminase (636 aa).

The interval 1–276 (MKKIYGEKIK…IKSDFVPEND (276 aa)) is phosphonoacetaldehyde hydrolase. Aspartate 15 acts as the Nucleophile in catalysis. Residues aspartate 15 and alanine 17 each contribute to the Mg(2+) site. Lysine 56 functions as the Schiff-base intermediate with substrate in the catalytic mechanism. Residue aspartate 189 coordinates Mg(2+). The 2-aminoethylphosphonate--pyruvate transaminase stretch occupies residues 277 to 636 (YILLTPGPLS…ADVIEKFINR (360 aa)). Residue lysine 465 is modified to N6-(pyridoxal phosphate)lysine.

In the N-terminal section; belongs to the HAD-like hydrolase superfamily. PhnX family. The protein in the C-terminal section; belongs to the class-V pyridoxal-phosphate-dependent aminotransferase family. PhnW subfamily. Homodimer. The cofactor is Mg(2+). Pyridoxal 5'-phosphate serves as cofactor.

The enzyme catalyses (2-aminoethyl)phosphonate + pyruvate = phosphonoacetaldehyde + L-alanine. The catalysed reaction is phosphonoacetaldehyde + H2O = acetaldehyde + phosphate + H(+). Functionally, involved in phosphonate degradation. This Clostridioides difficile (strain 630) (Peptoclostridium difficile) protein is Bifunctional phosphonoacetaldehyde hydrolase/aminoethylphosphonate transaminase (phnXW).